Consider the following 228-residue polypeptide: Cytochrome b6-f complex iron-sulfur subunit 2, chloroplastic (228 aa).

A chloroplast-targeting transit peptide spans methionine 1–methionine 49. Residues leucine 71–phenylalanine 91 traverse the membrane as a helical segment. Residues alanine 115–phenylalanine 211 form the Rieske domain. [2Fe-2S] cluster-binding residues include cysteine 157, histidine 159, cysteine 175, and histidine 178. The cysteines at positions 162 and 177 are disulfide-linked.

It belongs to the Rieske iron-sulfur protein family. As to quaternary structure, the 4 large subunits of the cytochrome b6-f complex are cytochrome b6, subunit IV (17 kDa polypeptide, petD), cytochrome f and the Rieske protein, while the 4 small subunits are petG, petL, petM and petN. The complex functions as a dimer. [2Fe-2S] cluster serves as cofactor.

It localises to the plastid. Its subcellular location is the chloroplast thylakoid membrane. The catalysed reaction is 2 oxidized [plastocyanin] + a plastoquinol + 2 H(+)(in) = 2 reduced [plastocyanin] + a plastoquinone + 4 H(+)(out). Component of the cytochrome b6-f complex, which mediates electron transfer between photosystem II (PSII) and photosystem I (PSI), cyclic electron flow around PSI, and state transitions. This chain is Cytochrome b6-f complex iron-sulfur subunit 2, chloroplastic (petC2), found in Nicotiana tabacum (Common tobacco).